Reading from the N-terminus, the 314-residue chain is Zinc transporter ZIP3 (314 aa).

The Extracellular portion of the chain corresponds to 1 to 3 (MVK). Residues 4–24 (LLVAKILCMVGVFFFMLLGSL) form a helical membrane-spanning segment. Topologically, residues 25-42 (LPVKIIETDFEKAHRSKK) are cytoplasmic. A helical transmembrane segment spans residues 43-63 (ILSLCNTFGGGVFLATCFNAL). At 64 to 85 (LPAVREKLQKVLSLGHISTDYP) the chain is on the extracellular side. The chain crosses the membrane as a helical span at residues 86–106 (LAETILLLGFFMTVFLEQLIL). At 107-169 (TFRKEKPSFI…QGLSRASPVR (63 aa)) the chain is on the cytoplasmic side. Phosphoserine is present on residues serine 125 and serine 129. Residues 170-190 (LLSLAFALSAHSVFEGLALGL) form a helical membrane-spanning segment. Residues 191-196 (QEEGEK) are Extracellular-facing. Residues 197–217 (VVSLFVGVAVHETLVAVALGI) traverse the membrane as a helical segment. The Cytoplasmic segment spans residues 218–229 (SMARSAMPLRDA). A helical membrane pass occupies residues 230–250 (AKLAVTVSAMIPLGIGLGLGI). At 251–262 (ESAQGVPGSVAS) the chain is on the extracellular side. Residues 263 to 283 (VLLQGLAGGTFLFITFLEILA) form a helical membrane-spanning segment. Topologically, residues 284-292 (KELEEKSDR) are cytoplasmic. Residues 293–313 (LLKVLFLVLGYTVLAGMVFLK) form a helical membrane-spanning segment. Position 314 (tryptophan 314) is a topological domain, extracellular.

The protein belongs to the ZIP transporter (TC 2.A.5) family.

It localises to the cell membrane. The protein localises to the apical cell membrane. The catalysed reaction is Zn(2+)(in) = Zn(2+)(out). Functionally, transporter for the divalent cation Zn(2+). Mediates the influx of Zn(2+) into cells from extracellular space. Controls Zn(2+) accumulation into dentate gyrus granule cells in the hippocampus. Mediates Zn(2+) reuptake from the secreted milk within the alveolar lumen. This chain is Zinc transporter ZIP3, found in Homo sapiens (Human).